The primary structure comprises 470 residues: tRNA-2-methylthio-N(6)-dimethylallyladenosine synthase (470 aa).

Residues M1–H116 form the MTTase N-terminal domain. The [4Fe-4S] cluster site is built by C10, C45, C79, C153, C157, and C160. The 231-residue stretch at R139–E369 folds into the Radical SAM core domain. Positions R372–L439 constitute a TRAM domain.

The protein belongs to the methylthiotransferase family. MiaB subfamily. Monomer. [4Fe-4S] cluster serves as cofactor.

The protein resides in the cytoplasm. The enzyme catalyses N(6)-dimethylallyladenosine(37) in tRNA + (sulfur carrier)-SH + AH2 + 2 S-adenosyl-L-methionine = 2-methylsulfanyl-N(6)-dimethylallyladenosine(37) in tRNA + (sulfur carrier)-H + 5'-deoxyadenosine + L-methionine + A + S-adenosyl-L-homocysteine + 2 H(+). Functionally, catalyzes the methylthiolation of N6-(dimethylallyl)adenosine (i(6)A), leading to the formation of 2-methylthio-N6-(dimethylallyl)adenosine (ms(2)i(6)A) at position 37 in tRNAs that read codons beginning with uridine. The polypeptide is tRNA-2-methylthio-N(6)-dimethylallyladenosine synthase (Tropheryma whipplei (strain Twist) (Whipple's bacillus)).